A 212-amino-acid chain; its full sequence is Adenylate kinase (212 aa).

G10 to T15 contacts ATP. Positions S30 to V59 are NMP. AMP contacts are provided by residues T31, R36, E57–V59, G86–R89, and Q93. The tract at residues G127 to D159 is LID. ATP-binding positions include R128 and T137–F138. AMP contacts are provided by R156 and R167. Q195 provides a ligand contact to ATP.

It belongs to the adenylate kinase family. As to quaternary structure, monomer.

The protein localises to the cytoplasm. It carries out the reaction AMP + ATP = 2 ADP. Its pathway is purine metabolism; AMP biosynthesis via salvage pathway; AMP from ADP: step 1/1. In terms of biological role, catalyzes the reversible transfer of the terminal phosphate group between ATP and AMP. Plays an important role in cellular energy homeostasis and in adenine nucleotide metabolism. The polypeptide is Adenylate kinase (Streptococcus pyogenes serotype M5 (strain Manfredo)).